The primary structure comprises 391 residues: Putative glutamate--cysteine ligase 2-2 (391 aa).

This sequence belongs to the glutamate--cysteine ligase type 2 family. YbdK subfamily.

The enzyme catalyses L-cysteine + L-glutamate + ATP = gamma-L-glutamyl-L-cysteine + ADP + phosphate + H(+). Its function is as follows. ATP-dependent carboxylate-amine ligase which exhibits weak glutamate--cysteine ligase activity. This chain is Putative glutamate--cysteine ligase 2-2, found in Saccharopolyspora erythraea (strain ATCC 11635 / DSM 40517 / JCM 4748 / NBRC 13426 / NCIMB 8594 / NRRL 2338).